We begin with the raw amino-acid sequence, 246 residues long: ATP synthase subunit a (246 aa).

Positions 1 to 3 (MFY) are cleaved as a propeptide — removed in mature form. 7 helical membrane-spanning segments follow: residues 21–41 (LTFS…IIIF), 56–76 (WGVS…GQIG), 82–102 (YFPL…ISMI), 113–133 (VAVV…GLYL), 138–158 (FFAL…LVLI), 184–204 (LMLI…LGFV), and 206–226 (GIIP…IAII).

The protein belongs to the ATPase A chain family. F-type ATPases have 2 components, CF(1) - the catalytic core - and CF(0) - the membrane proton channel. CF(1) has five subunits: alpha(3), beta(3), gamma(1), delta(1), epsilon(1). CF(0) has three main subunits: a, b and c.

The protein localises to the mitochondrion inner membrane. In terms of biological role, mitochondrial membrane ATP synthase (F(1)F(0) ATP synthase or Complex V) produces ATP from ADP in the presence of a proton gradient across the membrane which is generated by electron transport complexes of the respiratory chain. F-type ATPases consist of two structural domains, F(1) - containing the extramembraneous catalytic core and F(0) - containing the membrane proton channel, linked together by a central stalk and a peripheral stalk. During catalysis, ATP synthesis in the catalytic domain of F(1) is coupled via a rotary mechanism of the central stalk subunits to proton translocation. Key component of the proton channel; it may play a direct role in the translocation of protons across the membrane. The chain is ATP synthase subunit a (ATP6) from Candida parapsilosis (Yeast).